The chain runs to 168 residues: Photosystem I assembly protein Ycf3 (168 aa).

TPR repeat units follow at residues 35-68, 72-105, and 120-153; these read AFTY…EIDP, SYIL…NPFL, and GEQA…TPGN.

Belongs to the Ycf3 family.

It localises to the plastid. The protein resides in the chloroplast thylakoid membrane. Its function is as follows. Essential for the assembly of the photosystem I (PSI) complex. May act as a chaperone-like factor to guide the assembly of the PSI subunits. The polypeptide is Photosystem I assembly protein Ycf3 (Solanum bulbocastanum (Wild potato)).